Reading from the N-terminus, the 40-residue chain is Dihydrolipoyl dehydrogenase (40 aa).

36–40 (EKRGT) is a binding site for FAD.

Belongs to the class-I pyridine nucleotide-disulfide oxidoreductase family. In terms of assembly, homodimer. It depends on FAD as a cofactor.

It is found in the mitochondrion matrix. It carries out the reaction N(6)-[(R)-dihydrolipoyl]-L-lysyl-[protein] + NAD(+) = N(6)-[(R)-lipoyl]-L-lysyl-[protein] + NADH + H(+). Its function is as follows. Lipoamide dehydrogenase is a component of the glycine cleavage system as well as of the alpha-ketoacid dehydrogenase complexes. The pyruvate dehydrogenase complex contains multiple copies of three enzymatic components: pyruvate dehydrogenase (E1), dihydrolipoamide acetyltransferase (E2) and lipoamide dehydrogenase (E3). The sequence is that of Dihydrolipoyl dehydrogenase from Solanum tuberosum (Potato).